Consider the following 351-residue polypeptide: Methylthioribose-1-phosphate isomerase (351 aa).

Residues 51–53, arginine 94, and glutamine 199 contribute to the substrate site; that span reads RGA. Aspartate 240 serves as the catalytic Proton donor. 250 to 251 is a binding site for substrate; it reads NK.

Belongs to the EIF-2B alpha/beta/delta subunits family. MtnA subfamily. Homodimer.

It catalyses the reaction 5-(methylsulfanyl)-alpha-D-ribose 1-phosphate = 5-(methylsulfanyl)-D-ribulose 1-phosphate. Its pathway is amino-acid biosynthesis; L-methionine biosynthesis via salvage pathway; L-methionine from S-methyl-5-thio-alpha-D-ribose 1-phosphate: step 1/6. Its function is as follows. Catalyzes the interconversion of methylthioribose-1-phosphate (MTR-1-P) into methylthioribulose-1-phosphate (MTRu-1-P). This Bacillus thuringiensis (strain Al Hakam) protein is Methylthioribose-1-phosphate isomerase.